Reading from the N-terminus, the 562-residue chain is Glutamine--tRNA ligase (562 aa).

The 'HIGH' region motif lies at 35-45 (PEPNGYLHIGH). ATP contacts are provided by residues 36-38 (EPN) and 42-48 (HIGHAKS). Residues D68 and Y213 each coordinate L-glutamine. ATP-binding positions include T232, 262-263 (RL), and 270-272 (LSK). The 'KMSKS' region motif lies at 269–273 (ILSKR).

The protein belongs to the class-I aminoacyl-tRNA synthetase family. In terms of assembly, monomer.

It localises to the cytoplasm. It catalyses the reaction tRNA(Gln) + L-glutamine + ATP = L-glutaminyl-tRNA(Gln) + AMP + diphosphate. The sequence is that of Glutamine--tRNA ligase from Buchnera aphidicola subsp. Schizaphis graminum (strain Sg).